A 407-amino-acid chain; its full sequence is Mitochondrial protein import protein mas5 (407 aa).

The J domain maps to 6–68; it reads KLYEVLNVDV…EKRATYDRFG (63 aa). Substrate-binding positions include Leu110 and 129-131; that span reads LAL. The segment at 124-207 adopts a CR-type zinc-finger fold; it reads GKTTKLALQK…CDGAKVISQR (84 aa). The Zn(2+) site is built by Cys137, Cys140, Cys153, Cys156, Cys179, Cys182, Cys195, and Cys198. CXXCXGXG motif repeat units follow at residues 137–144, 153–160, 179–186, and 195–202; these read CPKCSGRG, CASCNGSG, CPDCNGAG, and CKECDGAK. Residues 209 to 210 and 241 to 243 contribute to the substrate site; these read IL and VIF. The interval 375-407 is disordered; that stretch reads VRIDNNVDPTTATSMDEDEDEEGGHPGVQCAQQ. The residue at position 404 (Cys404) is a Cysteine methyl ester. The S-farnesyl cysteine moiety is linked to residue Cys404. A propeptide spans 405 to 407 (removed in mature form); that stretch reads AQQ.

In terms of assembly, homodimer.

It is found in the cytoplasm. It localises to the nucleus. In terms of biological role, probably involved in mitochondrial protein import. Plays a role in microtubule cytoskeleton organization. The chain is Mitochondrial protein import protein mas5 (mas5) from Schizosaccharomyces pombe (strain 972 / ATCC 24843) (Fission yeast).